Reading from the N-terminus, the 273-residue chain is Phycobilisome 32.1 kDa linker polypeptide, phycocyanin-associated, rod 2 (273 aa).

Residues 1-180 form the PBS-linker domain; the sequence is MTSLVSAQRL…VYRGYATSDR (180 aa). Residues 220 to 273 form the CpcD-like domain; sequence NQMYRLQVIQGAAPGRGTRVRRGKAEYLVSYDNLSAKLQQINRQGDTVTMISLA.

It belongs to the phycobilisome linker protein family. In terms of assembly, part of 2 PBS rod complexes, the conventional CpcG-PBS rod and a photosystem I-specific CpcL-PBS rod, both of which include ferredoxin--NADP reductase (petH). CpcG-PBS has on average 3 stacked phycocyanin hexamers (PC, CpcA and CpcB). Linker CpcG connects the PC stack to the thylakoid, the hexamers are linked by 1 copy of CpcC1, 1 copy of CpcC2 and the stack is terminated by a single copy of CpcD. The CpcL-PBS has on average 5 stacked phycocyanin hexamers (PC, CpcA and CpcB). Linker CpcL connects the PC stack to the thylakoid, the hexamers are linked by 1 copy of CpcC1, 3 copies of CpcC2 and the stack is terminated by a single copy of CpcD. Interacts with the C-phycocyanin (PC) beta subunit (cpcB), it may fit into the center of the PC hexamer.

Its subcellular location is the cellular thylakoid membrane. In terms of biological role, rod linker protein, associated with phycocyanin. Linker polypeptides determine the state of aggregation and the location of the disk-shaped phycobiliprotein units within the phycobilisome and modulate their spectroscopic properties in order to mediate a directed and optimal energy transfer. The chain is Phycobilisome 32.1 kDa linker polypeptide, phycocyanin-associated, rod 2 (cpcC2) from Synechocystis sp. (strain ATCC 27184 / PCC 6803 / Kazusa).